The chain runs to 190 residues: MATIGYIRVSTIDQNIDLQRNALTSANCDRIFEDRISGKIANRPGLKRALKYVNKGDTLVVWKLDRLGRSVKNLVALISELHERGAHFHSLTDSIDTSSAMGRFFFHVMSALAEMERELIVERTLAGLAAARAQGRLGGRPRAINKHEQEQISRLLEKGHPRQQLAIIFGIGVSTLYRYFPASRIKKRMN.

In terms of domain architecture, Resolvase/invertase-type recombinase catalytic spans Ala-2–Gly-135. Ser-10 serves as the catalytic O-(5'-phospho-DNA)-serine intermediate. The H-T-H motif DNA-binding region spans Arg-162–Pro-181.

It belongs to the site-specific recombinase resolvase family.

Functionally, a DNA fragment of approximately 900 base pairs, adjacent to the fljB (H2) gene, which specifies the synthesis of phase-2 flagellin, can exist in either orientation with respect to fljB. The orientation of the inversion region controls expression of fljB. The hin gene occupies about two-thirds of the inversion region; it is required for the inversion of the fljB controlling region. The protein is DNA-invertase hin (hin) of Salmonella typhimurium (strain LT2 / SGSC1412 / ATCC 700720).